The sequence spans 217 residues: Probable transaldolase (217 aa).

Lys83 serves as the catalytic Schiff-base intermediate with substrate.

Belongs to the transaldolase family. Type 3B subfamily.

It is found in the cytoplasm. It catalyses the reaction D-sedoheptulose 7-phosphate + D-glyceraldehyde 3-phosphate = D-erythrose 4-phosphate + beta-D-fructose 6-phosphate. Its pathway is carbohydrate degradation; pentose phosphate pathway; D-glyceraldehyde 3-phosphate and beta-D-fructose 6-phosphate from D-ribose 5-phosphate and D-xylulose 5-phosphate (non-oxidative stage): step 2/3. Its function is as follows. Transaldolase is important for the balance of metabolites in the pentose-phosphate pathway. This is Probable transaldolase from Caulobacter sp. (strain K31).